The chain runs to 323 residues: Beta-ketoacyl-[acyl-carrier-protein] synthase III (323 aa).

Active-site residues include C114 and H250. Positions 251–255 are ACP-binding; sequence QANLR. N280 is a catalytic residue.

The protein belongs to the thiolase-like superfamily. FabH family. In terms of assembly, homodimer.

Its subcellular location is the cytoplasm. The catalysed reaction is malonyl-[ACP] + acetyl-CoA + H(+) = 3-oxobutanoyl-[ACP] + CO2 + CoA. Its pathway is lipid metabolism; fatty acid biosynthesis. Functionally, catalyzes the condensation reaction of fatty acid synthesis by the addition to an acyl acceptor of two carbons from malonyl-ACP. Catalyzes the first condensation reaction which initiates fatty acid synthesis and may therefore play a role in governing the total rate of fatty acid production. Possesses both acetoacetyl-ACP synthase and acetyl transacylase activities. Its substrate specificity determines the biosynthesis of branched-chain and/or straight-chain of fatty acids. This is Beta-ketoacyl-[acyl-carrier-protein] synthase III from Cereibacter sphaeroides (strain ATCC 17029 / ATH 2.4.9) (Rhodobacter sphaeroides).